The chain runs to 252 residues: Geranylgeranylglyceryl phosphate synthase (252 aa).

Residues Asp-25 and Ser-54 each contribute to the Mg(2+) site. Residues 174–180, 205–206, and 227–228 each bind sn-glycerol 1-phosphate; these read FMDAGSG, GG, and GN.

The protein belongs to the GGGP/HepGP synthase family. Group II subfamily. In terms of assembly, homohexamer. Mg(2+) is required as a cofactor.

It carries out the reaction sn-glycerol 1-phosphate + (2E,6E,10E)-geranylgeranyl diphosphate = sn-3-O-(geranylgeranyl)glycerol 1-phosphate + diphosphate. In terms of biological role, prenyltransferase that catalyzes the transfer of the geranylgeranyl moiety of geranylgeranyl diphosphate (GGPP) to the C3 hydroxyl of sn-glycerol-1-phosphate (G1P). The chain is Geranylgeranylglyceryl phosphate synthase from Chitinophaga pinensis (strain ATCC 43595 / DSM 2588 / LMG 13176 / NBRC 15968 / NCIMB 11800 / UQM 2034).